Reading from the N-terminus, the 270-residue chain is uncharacterized protein (270 aa).

A signal peptide spans Met1 to Gly23. Asn246 and Asn252 each carry an N-linked (GlcNAc...) asparagine glycan.

It localises to the secreted. This is an uncharacterized protein from Caenorhabditis elegans.